A 516-amino-acid polypeptide reads, in one-letter code: Probable cytosol aminopeptidase (516 aa).

Lys288 and Asp293 together coordinate Mn(2+). Lys300 is an active-site residue. Mn(2+) contacts are provided by Asp311, Asp370, and Glu372. Arg374 is an active-site residue.

This sequence belongs to the peptidase M17 family. The cofactor is Mn(2+).

It localises to the cytoplasm. The catalysed reaction is Release of an N-terminal amino acid, Xaa-|-Yaa-, in which Xaa is preferably Leu, but may be other amino acids including Pro although not Arg or Lys, and Yaa may be Pro. Amino acid amides and methyl esters are also readily hydrolyzed, but rates on arylamides are exceedingly low.. It carries out the reaction Release of an N-terminal amino acid, preferentially leucine, but not glutamic or aspartic acids.. In terms of biological role, presumably involved in the processing and regular turnover of intracellular proteins. Catalyzes the removal of unsubstituted N-terminal amino acids from various peptides. The polypeptide is Probable cytosol aminopeptidase (Cupriavidus taiwanensis (strain DSM 17343 / BCRC 17206 / CCUG 44338 / CIP 107171 / LMG 19424 / R1) (Ralstonia taiwanensis (strain LMG 19424))).